Reading from the N-terminus, the 398-residue chain is O-methyltransferase hmp5 (398 aa).

S-adenosyl-L-methionine-binding positions include 233 to 234, glutamate 261, and 283 to 284; these read GG and DF. Residue histidine 303 is the Proton acceptor of the active site.

The protein belongs to the class I-like SAM-binding methyltransferase superfamily. Cation-independent O-methyltransferase family.

It participates in secondary metabolite biosynthesis. Functionally, O-methyltransferase; part of the gene cluster that mediates the biosynthesis of hypothemycin, a resorcylic acid lactone (RAL) that irreversibly inhibits a subset of protein kinases with a conserved cysteine in the ATP binding site such as human ERK2. The first step is performed by both PKSs hmp3 and hmp8 and leads to the production of 7',8'-dehydrozearalenol (DHZ). The highly reducing PKS hpm8 synthesizes the reduced hexaketide (7S,11S,2E,8E)-7,11-dihydroxy-dodeca-2,8-dienoate, which is transferred downstream to the non-reducing PKS hpm3. Hpm3 then extends the reduced hexaketide to a nonaketide, after which regioselective cyclization and macrolactonization affords DHZ. The next step is the conversion of DHZ into aigialomycin C and is performed by the O-methyltransferase hmp5, the FAD-binding monooxygenase hmp7, and the cytochrome P450 monooxygenase hmp1. The wide substrate tolerance of the hmp5 and hmp7 implies that the reactions from DHZ to aigialomycin C can occur in any order. The steps from aigialomycin C to hypothemycin are less well established. The FAD-linked oxidoreductase hmp9 presumably catalyzes oxidation of the C-6' hydroxyl to a ketone. The timing of this oxidation is important, since the resulting enone functional group is a Michael acceptor that can react spontaneously with glutathione, an abundant metabolite in fungal cells. The glutathione S-transferase hmp2 catalyzes cis-trans isomerization of the 7',8' double bond with equilibrium favoring the trans isomer. The hpm6-encoded transporter might preferentially pump hypothemycin out of the cell relative to the trans isomer aigialomycin A. The cis-to-trans isomerization may be coupled with C-4' hydroxylation, since all known hypothemycin analogs containing the enone functional group also have hydroxyl groups at both C-4' and C-5'. The chain is O-methyltransferase hmp5 from Hypomyces subiculosus (Nectria subiculosa).